The sequence spans 300 residues: Protein N-terminal and lysine N-methyltransferase EFM7 (300 aa).

Residues Trp-75, 101–103 (GAG), Asp-123, Trp-156, and Ser-179 each bind S-adenosyl-L-methionine.

This sequence belongs to the class I-like SAM-binding methyltransferase superfamily. EFM7 family.

It is found in the cytoplasm. In terms of biological role, S-adenosyl-L-methionine-dependent protein methyltransferase that trimethylates the N-terminal glycine 'Gly-2' of elongation factor 1-alpha, before also catalyzing the mono- and dimethylation of 'Lys-3'. This is Protein N-terminal and lysine N-methyltransferase EFM7 from Cryptococcus neoformans var. neoformans serotype D (strain JEC21 / ATCC MYA-565) (Filobasidiella neoformans).